Consider the following 284-residue polypeptide: 2-dehydro-3-deoxyphosphooctonate aldolase (284 aa).

Belongs to the KdsA family.

Its subcellular location is the cytoplasm. The catalysed reaction is D-arabinose 5-phosphate + phosphoenolpyruvate + H2O = 3-deoxy-alpha-D-manno-2-octulosonate-8-phosphate + phosphate. Its pathway is carbohydrate biosynthesis; 3-deoxy-D-manno-octulosonate biosynthesis; 3-deoxy-D-manno-octulosonate from D-ribulose 5-phosphate: step 2/3. It functions in the pathway bacterial outer membrane biogenesis; lipopolysaccharide biosynthesis. The polypeptide is 2-dehydro-3-deoxyphosphooctonate aldolase (kdsA) (Haemophilus influenzae (strain ATCC 51907 / DSM 11121 / KW20 / Rd)).